The primary structure comprises 1894 residues: MEQRRFYLRAMQADNLSVVLLSVAWLLLARGTTGMPQYSTFHSENRDWTFNHLTVHRRTGAVYVGAINRVYKLTGNLTIQVAHKTGPEEDNKACYPPLIVQPCSEVLTLTNNVNKLLIIDYSENRLLACGSLYQGVCKLLRLDDLFILVEPSHKKEHYLSSVNKTGTMYGVIVRSEGEDGKLFIGTAVDGKQDYFPTLSSRKLPRDPESSAMLDYELHSDFVSSLIKIPSDTLALVSHFDIFYIYGFASGGFVYFLTVQPETPDGMAINSAGDLFYTSRIVRLCKDDPKFHSYVSLPFGCTRAGVEYRLLQAAYLAKPGEALAQAFNISSDEDVLFAIFSKGQKQYHHPPDDSALCAFPIRAINLQIKERLQSCYHGEGNLELNWLLGKDVQCTKAPVPIDDNFCGLDINQPLGGSTPVEGLTLYTTSRDRLTSVASYVYNGYSVVFVGTKSGKLKKIRADGPPHGGVQYEMVSVFKDGSPILRDMAFSINQLYLYVMSERQVTRVPVESCEQYTTCGECLSSGDPHCGWCALHNMCSRRDKCQRAWEANRFAASISQCMSLEVHPNSISVSDHSRLLSLVVNDAPNLSEGIACAFGNLTEVEGQVSGSQVICISPGPKDVPVIPLDQDWFGLELQLRSKETGKIFVSTEFKFYNCSAHQLCLSCVNSAFRCHWCKYRNLCTHDPTTCSFQEGRINVSEDCPQLVPTEEILIPVGEVKPITLKARNLPQPQSGQRGYECVLSIQGAVHRVPALRFNSSSVQCQNSSYQYDGMDISNLAVDFAVVWNGNFIIDNPQDLKVHLYKCAAQRESCGLCLKADHKFECGWCSGERRCTLHQHCPSTSSPWLDWSSHNVKCSNPQITEILTVSGPPEGGTRVTIHGVNLGLDFSEIAHHVQVAGVPCTPIPGEYIIAEQIVCEMGHAVIGTTSGPVRLCIGECKPEFMTKSHQQYTFVNPSVLSLSPIRGPESGGTMVTITGHYLGAGSSVAVYLGNQTCEFYGRSMNEIVCVSPPSSNGLGPVPVSVSVDRARVDSSLQFEYIDDPRVQRIEPEWSITSGHTPLTITGFNLDVIQEPRVRVKFNGKESVNVCTVVNTTTLTCLAPSLTSDYRPGLDTVERPDEFGFLFNNVQSLLIYNDTKFIYYPNPTFELLSPTGILDQKPGSPIILKGKNLCPPASGGAKLNYTVMIGETPCTVTVSETQLLCEPPNLTGQHKVMVHVGGMVFSPGSVSVISDSLLTLPAIISIAAGGSLLLIIVIIVLIAYKRKSRENDLTLKRLQMQMDNLESRVALECKEAFAELQTDINELTSDLDRSGIPYLDYRTYAMRVLFPGIEDHPVLRELEVQGNGQQHVEKALKLFAQLINNKVFLLTFIRTLELQRSFSMRDRGNVASLIMTGLQGRLEYATDVLKQLLSDLIDKNLENKNHPKLLLRRTESVAEKMLTNWFAFLLHKFLKECAGEPLFMLYCAIKQQMEKGPIDAITGEARYSLSEDKLIRQQIEYKTLILNCVNPDNENSPEIPVKVLNCDTITQVKEKILDAVYKNVPYSQRPRAVDMDLEWRQGRIARVVLQDEDITTKIEGDWKRLNTLMHYQVSDRSVVALVPKQTSSYNIPASASISRTSISRYDSSFRYTGSPDSLRSRVPMITPDLESGVKVWHLVKNHDHGDQKEGDRGSKMVSEIYLTRLLATKGTLQKFVDDLFETLFSTVHRGSALPLAIKYMFDFLDEQADRHSIHDTDVRHTWKSNCLPLRFWVNVIKNPQFVFDIHKGSITDACLSVVAQTFMDSCSTSEHRLGKDSPSNKLLYAKDIPSYKNWVERYYADIAKLPAISDQDMNAYLAEQSRLHATEFNMLSALNEIYSYVSKYSEELIGALEQDEQARRQRLAYKVEHLINAMSIES.

Residues 1-34 (MEQRRFYLRAMQADNLSVVLLSVAWLLLARGTTG) form the signal peptide. N-linked (GlcNAc...) asparagine glycans are attached at residues asparagine 15 and asparagine 76. The region spanning 35–508 (MPQYSTFHSE…SERQVTRVPV (474 aa)) is the Sema domain. The Extracellular segment spans residues 35–1237 (MPQYSTFHSE…VISDSLLTLP (1203 aa)). Intrachain disulfides connect cysteine 94–cysteine 103 and cysteine 129–cysteine 137. N-linked (GlcNAc...) asparagine glycans are attached at residues asparagine 163 and asparagine 327. Intrachain disulfides connect cysteine 284/cysteine 405, cysteine 300/cysteine 356, cysteine 374/cysteine 393, cysteine 511/cysteine 528, cysteine 517/cysteine 559, cysteine 520/cysteine 537, cysteine 531/cysteine 543, and cysteine 594/cysteine 613. 3 N-linked (GlcNAc...) asparagine glycosylation sites follow: asparagine 598, asparagine 696, and asparagine 756. IPT/TIG domains lie at 858–951 (PQIT…QYTF), 954–1037 (PSVL…QFEY), 1041–1139 (PRVQ…KFIY), and 1143–1228 (PTFE…SVSV). Asparagine 1180 and asparagine 1205 each carry an N-linked (GlcNAc...) asparagine glycan. A helical transmembrane segment spans residues 1238 to 1258 (AIISIAAGGSLLLIIVIIVLI). The Cytoplasmic segment spans residues 1259–1894 (AYKRKSREND…HLINAMSIES (636 aa)). Residues 1261-1310 (KRKSRENDLTLKRLQMQMDNLESRVALECKEAFAELQTDINELTSDLDRS) are a coiled coil. Residue serine 1612 is modified to Phosphoserine.

This sequence belongs to the plexin family. In terms of assembly, homodimer. Interacts with RND1. Interacts directly with NRP1 and NRP2. The PLXNA2 homodimer interacts with a SEMA6A homodimer, giving rise to a heterotetramer.

The protein localises to the cell membrane. Functionally, coreceptor for SEMA3A and SEMA6A. Necessary for signaling by SEMA6A and class 3 semaphorins and subsequent remodeling of the cytoskeleton. Plays a role in axon guidance, invasive growth and cell migration. Class 3 semaphorins bind to a complex composed of a neuropilin and a plexin. The plexin modulates the affinity of the complex for specific semaphorins, and its cytoplasmic domain is required for the activation of down-stream signaling events in the cytoplasm. The chain is Plexin-A2 (Plxna2) from Mus musculus (Mouse).